Consider the following 260-residue polypeptide: Global transcriptional regulator CodY (260 aa).

A GAF domain region spans residues 1-159 (MPNLLEKTRK…SSTVVGIQLL (159 aa)). A DNA-binding region (H-T-H motif) is located at residues 207 to 226 (ASVIADRIGITRSVIVNALR).

This sequence belongs to the CodY family.

Its subcellular location is the cytoplasm. DNA-binding global transcriptional regulator which is involved in the adaptive response to starvation and acts by directly or indirectly controlling the expression of numerous genes in response to nutrient availability. During rapid exponential growth, CodY is highly active and represses genes whose products allow adaptation to nutrient depletion. This is Global transcriptional regulator CodY from Streptococcus equi subsp. zooepidemicus (strain H70).